The sequence spans 235 residues: Ribonuclease 3 (235 aa).

The 130-residue stretch at L6–G135 folds into the RNase III domain. E48 lines the Mg(2+) pocket. D52 is a catalytic residue. The Mg(2+) site is built by N121 and E124. Residue E124 is part of the active site. The DRBM domain maps to D162 to N231.

The protein belongs to the ribonuclease III family. Homodimer. It depends on Mg(2+) as a cofactor.

The protein resides in the cytoplasm. The catalysed reaction is Endonucleolytic cleavage to 5'-phosphomonoester.. Its function is as follows. Digests double-stranded RNA. Involved in the processing of primary rRNA transcript to yield the immediate precursors to the large and small rRNAs (23S and 16S). Processes some mRNAs, and tRNAs when they are encoded in the rRNA operon. Processes pre-crRNA and tracrRNA of type II CRISPR loci if present in the organism. The chain is Ribonuclease 3 from Carboxydothermus hydrogenoformans (strain ATCC BAA-161 / DSM 6008 / Z-2901).